Consider the following 307-residue polypeptide: Small ribosomal subunit protein uS5m (307 aa).

The transit peptide at 1 to 13 directs the protein to the mitochondrion; that stretch reads MFKRQLSTSVRYL. The 65-residue stretch at 144–208 folds into the S5 DRBM domain; sequence LTMKPLVMKR…WDAVRNLKEI (65 aa).

Belongs to the universal ribosomal protein uS5 family. In terms of assembly, component of the mitochondrial small ribosomal subunit (mt-SSU). Mature yeast 74S mitochondrial ribosomes consist of a small (37S) and a large (54S) subunit. The 37S small subunit contains a 15S ribosomal RNA (15S mt-rRNA) and 34 different proteins. The 54S large subunit contains a 21S rRNA (21S mt-rRNA) and 46 different proteins. uS3m, uS4m and uS5m form the narrow entry site of the mRNA channel.

It localises to the mitochondrion. Functionally, component of the mitochondrial ribosome (mitoribosome), a dedicated translation machinery responsible for the synthesis of mitochondrial genome-encoded proteins, including at least some of the essential transmembrane subunits of the mitochondrial respiratory chain. The mitoribosomes are attached to the mitochondrial inner membrane and translation products are cotranslationally integrated into the membrane. This is Small ribosomal subunit protein uS5m (MRPS5) from Saccharomyces cerevisiae (strain ATCC 204508 / S288c) (Baker's yeast).